The following is a 282-amino-acid chain: Armadillo repeat-containing protein 1 (282 aa).

Met1 is subject to N-acetylmethionine. The ARM repeat unit spans residues 39-81; that stretch reads GCLPGLILFMDHPNPPVVHSALLALRYLAECRANREKMKGELG. Thr137 is subject to Phosphothreonine. Phosphoserine is present on residues Ser189, Ser246, Ser260, and Ser267. The tract at residues 239-261 is disordered; the sequence is DYLPEDESPTKEQDKAVSRVGSH. The segment covering 246–255 has biased composition (basic and acidic residues); the sequence is SPTKEQDKAV.

As to quaternary structure, interacts with mitochondrial contact site and cristae organizing system (MICOS) complex components IMMT/MIC60 and MICOS10/MIC10. Interacts with mitochondrial outer membrane sorting assembly machinery (SAM) complex components SAMM50 and MTX1.

The protein localises to the cytoplasm. Its subcellular location is the mitochondrion. It localises to the mitochondrion outer membrane. Its function is as follows. In association with mitochondrial contact site and cristae organizing system (MICOS) complex components and mitochondrial outer membrane sorting assembly machinery (SAM) complex components may regulate mitochondrial dynamics playing a role in determining mitochondrial length, distribution and motility. This chain is Armadillo repeat-containing protein 1 (Armc1), found in Mus musculus (Mouse).